The primary structure comprises 173 residues: Alpha-crystallin A chain (173 aa).

At M1 the chain carries N-acetylmethionine. Residues 1–63 (MDVTIQHPWF…RTVLDSGVSE (63 aa)) form a required for complex formation with BFSP1 and BFSP2 region. Q6 carries the deamidated glutamine; partial modification. At S45 the chain carries Phosphoserine. A Deamidated glutamine; partial modification is found at Q50. One can recognise a sHSP domain in the interval 52 to 162 (LFRTVLDSGV…GHSERAIPVS (111 aa)). K70 is subject to N6-acetyllysine. A Deamidated glutamine; partial modification is found at Q90. K99 carries the post-translational modification N6-acetyllysine. Residue H100 participates in Zn(2+) binding. N101 carries the deamidated asparagine; partial modification. Zn(2+)-binding residues include E102 and H107. Position 122 is a phosphoserine (S122). N123 carries the post-translational modification Deamidated asparagine; partial. The disordered stretch occupies residues 144–173 (PKVQSGLDAGHSERAIPVSREEKPSSAPSS). A Deamidated glutamine; partial modification is found at Q147. Residues 153–167 (GHSERAIPVSREEKP) are compositionally biased toward basic and acidic residues. Residue H154 coordinates Zn(2+). O-linked (GlcNAc) serine glycosylation is present at S162.

This sequence belongs to the small heat shock protein (HSP20) family. Heteromer composed of three CRYAA and one CRYAB subunits. Inter-subunit bridging via zinc ions enhances stability, which is crucial as there is no protein turn over in the lens. Can also form homodimers and homotetramers (dimers of dimers) which serve as the building blocks of homooligomers. Within homooligomers, the zinc-binding motif is created from residues of 3 different molecules. His-100 and Glu-102 from one molecule are ligands of the zinc ion, and His-107 and His-154 residues from additional molecules complete the site with tetrahedral coordination geometry. Part of a complex required for lens intermediate filament formation composed of BFSP1, BFSP2 and CRYAA. Post-translationally, acetylation at Lys-70 may increase chaperone activity. Undergoes age-dependent proteolytical cleavage at the C-terminus.

It is found in the cytoplasm. The protein resides in the nucleus. Functionally, contributes to the transparency and refractive index of the lens. Acts as a chaperone, preventing aggregation of various proteins under a wide range of stress conditions. Required for the correct formation of lens intermediate filaments as part of a complex composed of BFSP1, BFSP2 and CRYAA. The polypeptide is Alpha-crystallin A chain (CRYAA) (Otolemur crassicaudatus (Brown greater galago)).